The following is a 385-amino-acid chain: 1-deoxy-D-xylulose 5-phosphate reductoisomerase (385 aa).

NADPH contacts are provided by Thr10, Gly11, Ser12, Ile13, Lys37, and Asn124. Lys125 is a 1-deoxy-D-xylulose 5-phosphate binding site. Glu126 contacts NADPH. Asp150 is a Mn(2+) binding site. 4 residues coordinate 1-deoxy-D-xylulose 5-phosphate: Ser151, Glu152, Ser176, and His199. Glu152 is a Mn(2+) binding site. NADPH is bound at residue Gly205. The 1-deoxy-D-xylulose 5-phosphate site is built by Ser212, Asn217, Lys218, and Glu221. Residue Glu221 coordinates Mn(2+).

This sequence belongs to the DXR family. It depends on Mg(2+) as a cofactor. Requires Mn(2+) as cofactor.

It catalyses the reaction 2-C-methyl-D-erythritol 4-phosphate + NADP(+) = 1-deoxy-D-xylulose 5-phosphate + NADPH + H(+). It functions in the pathway isoprenoid biosynthesis; isopentenyl diphosphate biosynthesis via DXP pathway; isopentenyl diphosphate from 1-deoxy-D-xylulose 5-phosphate: step 1/6. Its function is as follows. Catalyzes the NADPH-dependent rearrangement and reduction of 1-deoxy-D-xylulose-5-phosphate (DXP) to 2-C-methyl-D-erythritol 4-phosphate (MEP). The polypeptide is 1-deoxy-D-xylulose 5-phosphate reductoisomerase (Clostridium botulinum (strain Okra / Type B1)).